A 307-amino-acid polypeptide reads, in one-letter code: Thiamine-monophosphate kinase (307 aa).

Asp26, Thr37, Thr38, and Asp39 together coordinate Mg(2+). His46 lines the substrate pocket. Residues Asp68 and Asp117 each contribute to the Mg(2+) site. ATP contacts are provided by residues 116 to 117 (GD) and Arg140. Residue Asp207 coordinates Mg(2+). Thr209 provides a ligand contact to ATP. Position 210 (Asp210) interacts with Mg(2+). Substrate is bound by residues Glu254 and Phe304.

This sequence belongs to the thiamine-monophosphate kinase family.

It catalyses the reaction thiamine phosphate + ATP = thiamine diphosphate + ADP. It participates in cofactor biosynthesis; thiamine diphosphate biosynthesis; thiamine diphosphate from thiamine phosphate: step 1/1. In terms of biological role, catalyzes the ATP-dependent phosphorylation of thiamine-monophosphate (TMP) to form thiamine-pyrophosphate (TPP), the active form of vitamin B1. The polypeptide is Thiamine-monophosphate kinase (Leptospira interrogans serogroup Icterohaemorrhagiae serovar Lai (strain 56601)).